Here is a 520-residue protein sequence, read N- to C-terminus: MSKQGNFQKSMSLFDLILIGMGAIFGSAWLFAVSNVASKAGPSGAFSWILGGAIILLIGLVYAELGAALPRTGGIIRYPVYSHGHLVGYLISFVTIVAYTSLISIEVTAVRQYVAYWFPGLTIKGSDSPTISGWILQFALLCLFFLLNYWSVKTFAKANFIISIFKYIVPITIIIVLIFHFQPENLSVQGFAPFGFTGIQAAISTGGVMFAYLGLHPIVSVAGEVQNPKRNIPIALIICIIVSTIIYTVLQVTFIGAIPTETLKHGWPAIGREFSLPFKDIAVMLGLGWLATLVILDAILSPGGNGNIFMNTTSRLVYAWARNGTLFGIFSKVNKDTGTPRASLWLSFALSIFWTLPFPSWNALVNVCSVALILSYAIAPISSAALRVNAKDLNRPFYLKGMSIIGPLSFIFTAFIVYWSGWKTVSWLLGSQLVMFLIYLCFSKYTPKEDVSLAQQLKSAWWLIGFYIMMLIFSYIGSFGHGLGIISNPVDLILVAIGSLAIYYWAKYTGLPKAAIDYDK.

The next 14 membrane-spanning stretches (helical) occupy residues 13 to 33 (LFDLILIGMGAIFGSAWLFAV), 49 to 69 (ILGGAIILLIGLVYAELGAAL), 85 to 105 (HLVGYLISFVTIVAYTSLISI), 130 to 150 (TISGWILQFALLCLFFLLNYW), 161 to 181 (IISIFKYIVPITIIIVLIFHF), 201 to 221 (AAISTGGVMFAYLGLHPIVSV), 232 to 252 (IPIALIICIIVSTIIYTVLQV), 281 to 301 (IAVMLGLGWLATLVILDAILS), 345 to 365 (WLSFALSIFWTLPFPSWNALV), 366 to 386 (NVCSVALILSYAIAPISSAAL), 402 to 422 (MSIIGPLSFIFTAFIVYWSGW), 425 to 445 (VSWLLGSQLVMFLIYLCFSKY), 460 to 480 (AWWLIGFYIMMLIFSYIGSFG), and 482 to 502 (GLGIISNPVDLILVAIGSLAI).

It belongs to the amino acid-polyamine-organocation (APC) superfamily. AGT (TC 2.A.3.11) family.

The protein resides in the cell membrane. Uptake of L-aspartate with the concomitant import of a proton. Can also transport aspartate hydroxamate and L-glutamate with lower affinity and efficiency. This Bacillus subtilis (strain 168) protein is Aspartate-proton symporter (yveA).